An 80-amino-acid polypeptide reads, in one-letter code: Protein CEBPZOS (80 aa).

A helical membrane pass occupies residues 15–32 (GVLVAELVGVFGAYFLFS).

Its subcellular location is the mitochondrion membrane. This is Protein CEBPZOS from Homo sapiens (Human).